A 299-amino-acid polypeptide reads, in one-letter code: ATP synthase gamma chain (299 aa).

The protein belongs to the ATPase gamma chain family. F-type ATPases have 2 components, CF(1) - the catalytic core - and CF(0) - the membrane proton channel. CF(1) has five subunits: alpha(3), beta(3), gamma(1), delta(1), epsilon(1). CF(0) has three main subunits: a, b and c.

It localises to the cell membrane. In terms of biological role, produces ATP from ADP in the presence of a proton gradient across the membrane. The gamma chain is believed to be important in regulating ATPase activity and the flow of protons through the CF(0) complex. This is ATP synthase gamma chain from Clavibacter sepedonicus (Clavibacter michiganensis subsp. sepedonicus).